The primary structure comprises 85 residues: UPF0298 protein SUB0431 (85 aa).

This sequence belongs to the UPF0298 family.

The protein resides in the cytoplasm. The sequence is that of UPF0298 protein SUB0431 from Streptococcus uberis (strain ATCC BAA-854 / 0140J).